The primary structure comprises 146 residues: Snake venom vascular endothelial growth factor toxin (146 aa).

The signal sequence occupies residues 1-24 (MAVYLLAVAILFCIQGWPLGTVQG). The residue at position 25 (Gln-25) is a Pyrrolidone carboxylic acid. 3 disulfides stabilise this stretch: Cys-38/Cys-80, Cys-69/Cys-115, and Cys-73/Cys-117. The segment at 118-146 (RPRSASGVNSRKHKRNPEEGEPRAKFPFV) is disordered. A compositionally biased stretch (basic and acidic residues) spans 133-146 (NPEEGEPRAKFPFV).

It belongs to the PDGF/VEGF growth factor family. Snake venom VEGF subfamily. Homodimer; disulfide-linked. Interacts with VEGF receptor-1 (FLT1) with a high affinity, whereas it binds to VEGF receptor-2 (KDR) with a low affinity. Does not bind VEGF receptor-3 (FLT4). As to expression, expressed by the venom gland.

The protein resides in the secreted. Its function is as follows. Snake venom VEGFs that may contribute to venom dispersion and prey subjugation by inducing vascular permeability and hypotension. This protein induces an increase in capillary permeability after intradermal injection, as well as a drastic hypotensive effect after intravenous injection. The hypotension is mediated by nitric oxide (NO), which is produced by VEGF-activated endothelium NO synthase. Also induces angiogenesis in vitro. Like other crotalid VEGFs, this protein interacts with VEGF receptor-1 (FLT1) with a high affinity, whereas it binds to VEGF receptor-2 (KDR) with a low affinity. In Bothrops jararaca (Jararaca), this protein is Snake venom vascular endothelial growth factor toxin.